Consider the following 1647-residue polypeptide: Nucleoporin nup186 (1647 aa).

The protein belongs to the NUP186/NUP192/NUP205 family.

Its subcellular location is the cytoplasm. The protein localises to the nucleus. In terms of biological role, functions as a component of the nuclear pore complex (NPC). NPC components, collectively referred to as nucleoporins (NUPs), can play the role of both NPC structural components and of docking or interaction partners for transiently associated nuclear transport factors. Active directional transport is assured by both, a Phe-Gly (FG) repeat affinity gradient for these transport factors across the NPC and a transport cofactor concentration gradient across the nuclear envelope. This is Nucleoporin nup186 (nup186) from Schizosaccharomyces pombe (strain 972 / ATCC 24843) (Fission yeast).